A 372-amino-acid chain; its full sequence is MRIVVKVGTSTLTHENGKLNLEIMEKLVRQIANLSNKGEEVILVTSGAIGAGMGKLNLTEKPKNLPQKQALAAIGQGLLIEIYEKFFNEYGKITAQLLLTREDFSDRKRYLNMSYTLSNLLKWGVIPVINENDTVAVEEIKIGDNDTLAALVASLVEADLLIILTDIDGLFDKDPRIYKDAKVIEVVEEFSDDLFKIAGGAGTKRGTGGMYTKIQAAKICYNSGVKMVIANGKIDNVLNRIAAGEKIGTTFLPMKNPISSRKIWIAFNAKVNGFLFVDEGAAKALVKHGKSLLPSGIVKTEGQYDVGDCVAVVDHQGREIARGLVNYSSEEVEKIKGCKTHDIESILGYKYYDEVIHRDNLVVLERGEKYGG.

Residue Lys6 participates in ATP binding. Residues Ser46, Asp133, and Asn145 each contribute to the substrate site. Residues 165-166 and 207-213 contribute to the ATP site; these read TD and TGGMYTK. A PUA domain is found at 272-350; sequence NGFLFVDEGA…HDIESILGYK (79 aa).

Belongs to the glutamate 5-kinase family.

It is found in the cytoplasm. It catalyses the reaction L-glutamate + ATP = L-glutamyl 5-phosphate + ADP. It participates in amino-acid biosynthesis; L-proline biosynthesis; L-glutamate 5-semialdehyde from L-glutamate: step 1/2. Catalyzes the transfer of a phosphate group to glutamate to form L-glutamate 5-phosphate. In Caldanaerobacter subterraneus subsp. tengcongensis (strain DSM 15242 / JCM 11007 / NBRC 100824 / MB4) (Thermoanaerobacter tengcongensis), this protein is Glutamate 5-kinase.